Reading from the N-terminus, the 423-residue chain is Mannose-6-phosphate isomerase (423 aa).

Alanine 2 carries the post-translational modification N-acetylalanine. Serine 102 and serine 108 each carry phosphoserine. Residues glutamine 110, histidine 112, glutamate 137, and histidine 276 each coordinate Zn(2+). The active site involves arginine 295.

The protein belongs to the mannose-6-phosphate isomerase type 1 family. Zn(2+) is required as a cofactor.

It localises to the cytoplasm. The enzyme catalyses D-mannose 6-phosphate = D-fructose 6-phosphate. It participates in nucleotide-sugar biosynthesis; GDP-alpha-D-mannose biosynthesis; alpha-D-mannose 1-phosphate from D-fructose 6-phosphate: step 1/2. Its function is as follows. Isomerase that catalyzes the interconversion of fructose-6-P and mannose-6-P and has a critical role in the supply of D-mannose derivatives required for many eukaryotic glycosylation reactions. In Macaca fascicularis (Crab-eating macaque), this protein is Mannose-6-phosphate isomerase (MPI).